We begin with the raw amino-acid sequence, 343 residues long: Sodium/bile acid cotransporter 7-A (343 aa).

Residues 1–10 (MGLLERLRKE) lie on the Cytoplasmic side of the membrane. A helical transmembrane segment spans residues 11 to 31 (WFIVGIILVIAAAKLEPTVGV). At 32–37 (KGGPLK) the chain is on the extracellular side. Residues 38 to 58 (PEITITYIAVSAIFFNSGLSL) traverse the membrane as a helical segment. Topologically, residues 59 to 71 (KTEELTNALMHVK) are cytoplasmic. Residues 72 to 92 (LHLFVQLFTLVFFPTAIWLFL) form a helical membrane-spanning segment. The Extracellular segment spans residues 93–116 (QVLSLTPINEWLLKGLQTVSCMPP). Residues 117-137 (PVSSAVILTKAVGGNEAAAIF) form a helical membrane-spanning segment. Asn138 is a topological domain (cytoplasmic). Residues 139–159 (SAFGSFLGIVVTPLLLLLFLG) traverse the membrane as a helical segment. Topologically, residues 160–163 (SSSS) are extracellular. The helical transmembrane segment at 164–184 (VPFTSIFSQLFMTVVVPLIIG) threads the bilayer. At 185 to 201 (QIVRRYIKDWLERKKPP) the chain is on the cytoplasmic side. A helical transmembrane segment spans residues 202 to 222 (FGAISSCVLLMIIYTTFCDTF). Topologically, residues 223–234 (SNPNIDLDTFSL) are extracellular. A helical transmembrane segment spans residues 235–255 (VVIVFIIFFIQLAFMLLTFLF). The Cytoplasmic portion of the chain corresponds to 256–270 (STSKNSGFTPADTVA). Residues 271 to 291 (IVFCSTHKSLTLGIPMLKIVF) form a helical membrane-spanning segment. Residues 292–298 (VGYEHLS) are Extracellular-facing. A helical transmembrane segment spans residues 299–319 (LISVPLLIYHPAQILLGSVLV). Over 320-343 (PTIKSWMLSRQKALKLTRQPKIPL) the chain is Cytoplasmic.

This sequence belongs to the bile acid:sodium symporter (BASS) (TC 2.A.28) family. As to expression, strongly expressed in small intestine. Moderately expressed in spleen. Weakly expressed in skeletal muscle. Not detected in other tissues tested.

It localises to the cell membrane. The protein localises to the endoplasmic reticulum membrane. The protein resides in the golgi apparatus membrane. In terms of biological role, involved in teeth and skeletal development. Has an essential role in the biosynthesis and trafficking of glycosaminoglycans and glycoproteins to produce a proper functioning extracellular matrix. Required for extracellular matrix mineralization. Also involved in the regulation of cellular calcium homeostasis. Does not show transport activity towards bile acids or steroid sulfates. In Xenopus laevis (African clawed frog), this protein is Sodium/bile acid cotransporter 7-A (slc10a7-a).